A 299-amino-acid chain; its full sequence is ATP phosphoribosyltransferase (299 aa).

The protein belongs to the ATP phosphoribosyltransferase family. Long subfamily. Equilibrium between an active dimeric form, an inactive hexameric form and higher aggregates. Interconversion between the various forms is largely reversible and is influenced by the natural substrates and inhibitors of the enzyme. Mg(2+) serves as cofactor.

Its subcellular location is the cytoplasm. The catalysed reaction is 1-(5-phospho-beta-D-ribosyl)-ATP + diphosphate = 5-phospho-alpha-D-ribose 1-diphosphate + ATP. Its pathway is amino-acid biosynthesis; L-histidine biosynthesis; L-histidine from 5-phospho-alpha-D-ribose 1-diphosphate: step 1/9. Its activity is regulated as follows. Feedback inhibited by histidine. In terms of biological role, catalyzes the condensation of ATP and 5-phosphoribose 1-diphosphate to form N'-(5'-phosphoribosyl)-ATP (PR-ATP). Has a crucial role in the pathway because the rate of histidine biosynthesis seems to be controlled primarily by regulation of HisG enzymatic activity. This is ATP phosphoribosyltransferase from Shigella dysenteriae serotype 1 (strain Sd197).